A 237-amino-acid polypeptide reads, in one-letter code: Phosphoribosylaminoimidazole-succinocarboxamide synthase (237 aa).

Belongs to the SAICAR synthetase family.

It carries out the reaction 5-amino-1-(5-phospho-D-ribosyl)imidazole-4-carboxylate + L-aspartate + ATP = (2S)-2-[5-amino-1-(5-phospho-beta-D-ribosyl)imidazole-4-carboxamido]succinate + ADP + phosphate + 2 H(+). The protein operates within purine metabolism; IMP biosynthesis via de novo pathway; 5-amino-1-(5-phospho-D-ribosyl)imidazole-4-carboxamide from 5-amino-1-(5-phospho-D-ribosyl)imidazole-4-carboxylate: step 1/2. The sequence is that of Phosphoribosylaminoimidazole-succinocarboxamide synthase from Enterobacter sp. (strain 638).